Here is a 196-residue protein sequence, read N- to C-terminus: HTH-type transcriptional regulator UidR (196 aa).

Residues 10–70 (QPTRTRILNA…AIILQDQERA (61 aa)) form the HTH tetR-type domain. Residues 33 to 52 (SMKAICKSCAISPGTLYHHF) constitute a DNA-binding region (H-T-H motif).

Repressor for the uidRABC (gusRABC) operon. In Escherichia coli O157:H7, this protein is HTH-type transcriptional regulator UidR (uidR).